A 497-amino-acid chain; its full sequence is Glutamyl-tRNA(Gln) amidotransferase subunit A (497 aa).

Residues K91 and S166 each act as charge relay system in the active site. The interval 143-171 (SSTENSAYGPTHNPWDLERTAGGSGGGSS) is disordered. S190 (acyl-ester intermediate) is an active-site residue.

Belongs to the amidase family. GatA subfamily. In terms of assembly, heterotrimer of A, B and C subunits.

The catalysed reaction is L-glutamyl-tRNA(Gln) + L-glutamine + ATP + H2O = L-glutaminyl-tRNA(Gln) + L-glutamate + ADP + phosphate + H(+). Its function is as follows. Allows the formation of correctly charged Gln-tRNA(Gln) through the transamidation of misacylated Glu-tRNA(Gln) in organisms which lack glutaminyl-tRNA synthetase. The reaction takes place in the presence of glutamine and ATP through an activated gamma-phospho-Glu-tRNA(Gln). This Corynebacterium glutamicum (strain ATCC 13032 / DSM 20300 / JCM 1318 / BCRC 11384 / CCUG 27702 / LMG 3730 / NBRC 12168 / NCIMB 10025 / NRRL B-2784 / 534) protein is Glutamyl-tRNA(Gln) amidotransferase subunit A.